A 157-amino-acid polypeptide reads, in one-letter code: MTEKRTEITIYTDGACSGNPGPGGYGIIILSEKKRQELSGGYKLTTNNRMELMAVIVGLEQLEIPSIVNLYTDSKYIVDAVTKGWAKRWRANSWKRNKKDKAMNPDLWGKLLDLCSKHQVEFSWVRGHSGNIENERCDKLAVKASQKLDLPSDLGYQ.

The RNase H type-1 domain occupies 4 to 146 (KRTEITIYTD…CDKLAVKASQ (143 aa)). Asp-13, Glu-51, Asp-73, and Asp-138 together coordinate Mg(2+).

This sequence belongs to the RNase H family. Monomer. It depends on Mg(2+) as a cofactor.

It is found in the cytoplasm. It carries out the reaction Endonucleolytic cleavage to 5'-phosphomonoester.. Functionally, endonuclease that specifically degrades the RNA of RNA-DNA hybrids. This Trichodesmium erythraeum (strain IMS101) protein is Ribonuclease H.